The chain runs to 865 residues: cGMP-specific 3',5'-cyclic phosphodiesterase (865 aa).

Phosphoserine is present on serine 92. GAF domains are found at residues 154 to 304 (DVTA…GIVL) and 336 to 493 (SLEV…GLGI). In terms of domain architecture, PDEase spans 526–850 (ETRELQSLAA…QKWQALAEQQ (325 aa)). The active-site Proton donor is the histidine 603. Histidine 607, histidine 643, aspartate 644, and aspartate 754 together coordinate Zn(2+). Mg(2+) is bound at residue aspartate 644. Glutamine 807 lines the 3',5'-cyclic GMP pocket.

Belongs to the cyclic nucleotide phosphodiesterase family. The cofactor is Zn(2+). Mg(2+) serves as cofactor. Post-translationally, phosphorylation is regulated by binding of cGMP to the two allosteric sites. Phosphorylation by PRKG1 leads to its activation.

The catalysed reaction is 3',5'-cyclic GMP + H2O = GMP + H(+). It participates in purine metabolism; 3',5'-cyclic GMP degradation; GMP from 3',5'-cyclic GMP: step 1/1. Its activity is regulated as follows. Most potently inhibited by zaprinast and dipyridamole. Functionally, plays a role in signal transduction by regulating the intracellular concentration of cyclic nucleotides. This phosphodiesterase catalyzes the specific hydrolysis of cGMP to 5'-GMP. Specifically regulates nitric-oxide-generated cGMP. The polypeptide is cGMP-specific 3',5'-cyclic phosphodiesterase (PDE5A) (Bos taurus (Bovine)).